Reading from the N-terminus, the 411-residue chain is Isocitrate dehydrogenase [NADP] peroxisomal (411 aa).

Residues 78 to 80 (TIT) and Arg-85 contribute to the NADP(+) site. A substrate-binding site is contributed by Thr-80. Substrate-binding positions include 97-103 (SPNGTLR), Arg-112, and Arg-135. Asp-254 serves as a coordination point for Mn(2+). Residue Lys-262 coordinates NADP(+). Asp-277 is a binding site for Mn(2+). Residues 312 to 317 (GTVTRH) and Asn-330 each bind NADP(+).

Belongs to the isocitrate and isopropylmalate dehydrogenases family. The cofactor is Mg(2+). Mn(2+) serves as cofactor.

It localises to the peroxisome. It carries out the reaction D-threo-isocitrate + NADP(+) = 2-oxoglutarate + CO2 + NADPH. May play a role in N-alkane metabolism, glutamate synthesis, and/or NADPH generation in the peroxisomes. This Candida tropicalis (Yeast) protein is Isocitrate dehydrogenase [NADP] peroxisomal (IDP2).